We begin with the raw amino-acid sequence, 429 residues long: Cleavage stimulation factor subunit 50 (429 aa).

The tract at residues 20 to 41 (LNALIVAHLRHHNLSQVASAVA) is hydrophobic. WD repeat units follow at residues 121 to 160 (EHKS…QMIS), 174 to 213 (DHAE…AKRA), 218 to 257 (QDTH…CFLP), 264 to 303 (GVSG…CVRS), 308 to 347 (HGKS…MVKE), 351 to 392 (AKRV…KVAK), and 396 to 429 (NHNG…KESV).

In terms of assembly, homodimer. Belongs to the CSTF complex. Forms a complex with cleavage and polyadenylation specificity factor (CPSF) subunits CSTF64, PABN3, CPSF30, FIPS5 and CPSF100.

The protein localises to the nucleus. One of the multiple factors required for polyadenylation and 3'-end cleavage of pre-mRNAs. May be responsible for the interaction of CSTF with other factors to form a stable complex on the pre-mRNA. In Arabidopsis thaliana (Mouse-ear cress), this protein is Cleavage stimulation factor subunit 50.